The chain runs to 430 residues: Long-chain specific acyl-CoA dehydrogenase, mitochondrial (430 aa).

A mitochondrion-targeting transit peptide spans 1–30; that stretch reads MAARLLRGSLRVLGGHRAPRQLPAARCSHS. Lys42 carries the N6-acetyllysine modification. Residue Ser54 is modified to Phosphoserine. Lys66 and Lys81 each carry N6-acetyllysine; alternate. Lys66 and Lys81 each carry N6-succinyllysine; alternate. Residues Lys92 and Lys95 each carry the N6-acetyllysine modification. Lys165 is modified (N6-succinyllysine). FAD is bound by residues 170–179 and 203–205; these read IAMTEPGAGS and FIS. Ser179 provides a ligand contact to substrate. 227–228 contributes to the substrate binding site; it reads AH. Lys240 bears the N6-succinyllysine mark. Lys254 and Lys279 each carry N6-acetyllysine; alternate. Residues Lys254 and Lys279 each carry the N6-succinyllysine; alternate modification. Substrate contacts are provided by residues Tyr282 and 289–292; that span reads PQER. The active-site Proton acceptor is the Glu291. Residue Arg317 participates in FAD binding. Lys318 bears the N6-acetyllysine mark. N6-acetyllysine; alternate is present on Lys322. Residue Lys322 is modified to N6-succinyllysine; alternate. An FAD-binding site is contributed by Gln328. Lys358 carries the post-translational modification N6-acetyllysine. Ser362 is modified (phosphoserine). Residue 385–389 participates in FAD binding; it reads QLHGG. Residue 412 to 413 coordinates substrate; that stretch reads GG. Residue 414–416 participates in FAD binding; sequence TNE.

Belongs to the acyl-CoA dehydrogenase family. Homotetramer. The cofactor is FAD. In terms of processing, acetylation at Lys-318 and Lys-322 in proximity of the cofactor-binding sites strongly reduces catalytic activity. These sites are deacetylated by SIRT3.

The protein resides in the mitochondrion matrix. The catalysed reaction is a long-chain 2,3-saturated fatty acyl-CoA + oxidized [electron-transfer flavoprotein] + H(+) = a long-chain (2E)-enoyl-CoA + reduced [electron-transfer flavoprotein]. The enzyme catalyses hexanoyl-CoA + oxidized [electron-transfer flavoprotein] + H(+) = (2E)-hexenoyl-CoA + reduced [electron-transfer flavoprotein]. It carries out the reaction octanoyl-CoA + oxidized [electron-transfer flavoprotein] + H(+) = (2E)-octenoyl-CoA + reduced [electron-transfer flavoprotein]. It catalyses the reaction decanoyl-CoA + oxidized [electron-transfer flavoprotein] + H(+) = (2E)-decenoyl-CoA + reduced [electron-transfer flavoprotein]. The catalysed reaction is dodecanoyl-CoA + oxidized [electron-transfer flavoprotein] + H(+) = (2E)-dodecenoyl-CoA + reduced [electron-transfer flavoprotein]. The enzyme catalyses tetradecanoyl-CoA + oxidized [electron-transfer flavoprotein] + H(+) = (2E)-tetradecenoyl-CoA + reduced [electron-transfer flavoprotein]. It carries out the reaction oxidized [electron-transfer flavoprotein] + hexadecanoyl-CoA + H(+) = (2E)-hexadecenoyl-CoA + reduced [electron-transfer flavoprotein]. It catalyses the reaction octadecanoyl-CoA + oxidized [electron-transfer flavoprotein] + H(+) = (2E)-octadecenoyl-CoA + reduced [electron-transfer flavoprotein]. The catalysed reaction is eicosanoyl-CoA + oxidized [electron-transfer flavoprotein] + H(+) = (2E)-eicosenoyl-CoA + reduced [electron-transfer flavoprotein]. The enzyme catalyses docosanoyl-CoA + oxidized [electron-transfer flavoprotein] + H(+) = (2E)-docosenoyl-CoA + reduced [electron-transfer flavoprotein]. It carries out the reaction tetracosanoyl-CoA + oxidized [electron-transfer flavoprotein] + H(+) = (2E)-tetracosenoyl-CoA + reduced [electron-transfer flavoprotein]. It catalyses the reaction (5E)-tetradecenoyl-CoA + oxidized [electron-transfer flavoprotein] + H(+) = (2E,5E)-tetradecadienoyl-CoA + reduced [electron-transfer flavoprotein]. The catalysed reaction is (5Z)-tetradecenoyl-CoA + oxidized [electron-transfer flavoprotein] + H(+) = (2E,5Z)-tetradecadienoyl-CoA + reduced [electron-transfer flavoprotein]. The enzyme catalyses oxidized [electron-transfer flavoprotein] + (9Z)-octadecenoyl-CoA + H(+) = (2E,9Z)-octadecadienoyl-CoA + reduced [electron-transfer flavoprotein]. Its pathway is lipid metabolism; mitochondrial fatty acid beta-oxidation. Its function is as follows. Long-chain specific acyl-CoA dehydrogenase is one of the acyl-CoA dehydrogenases that catalyze the first step of mitochondrial fatty acid beta-oxidation, an aerobic process breaking down fatty acids into acetyl-CoA and allowing the production of energy from fats. The first step of fatty acid beta-oxidation consists in the removal of one hydrogen from C-2 and C-3 of the straight-chain fatty acyl-CoA thioester, resulting in the formation of trans-2-enoyl-CoA. Among the different mitochondrial acyl-CoA dehydrogenases, long-chain specific acyl-CoA dehydrogenase can act on saturated and unsaturated acyl-CoAs with 6 to 24 carbons with a preference for 8 to 18 carbons long primary chains. The chain is Long-chain specific acyl-CoA dehydrogenase, mitochondrial from Homo sapiens (Human).